The chain runs to 141 residues: Cystatin (141 aa).

The first 26 residues, 1–26 (MVHSQLPVAAPLRLLCALLLLPSATM), serve as a signal peptide directing secretion. The region spanning 29 to 129 (GGLSPRSVTD…CHFQVWSRPW (101 aa)) is the Cystatin domain. The Secondary area of contact signature appears at 73-77 (QVVAG). Disulfide bonds link Cys-91–Cys-107 and Cys-120–Cys-140.

Belongs to the cystatin family. In terms of tissue distribution, expressed at a low level by the venom gland (at protein level).

It localises to the secreted. Functionally, inhibits various C1 cysteine proteases including cathepsin L, papain and cathepsin B. This protein has no toxic activity and its function in the venom is unknown. It may play a role as a housekeeping or regulatory protein. The chain is Cystatin from Pseudonaja textilis (Eastern brown snake).